Consider the following 293-residue polypeptide: Protease HtpX (293 aa).

Transmembrane regions (helical) follow at residues 4 to 24 (ISLFLLTNLAVMVVFGIVLSL) and 33 to 53 (AGLMIMAGLFGFGGAFVSLLM). Position 139 (H139) interacts with Zn(2+). The active site involves E140. Residue H143 coordinates Zn(2+). 2 helical membrane-spanning segments follow: residues 158–178 (VVNTFVIFISRILAQLAAGFM) and 193–213 (LVYFAVSMVLELVFGVLASII). E222 serves as a coordination point for Zn(2+).

This sequence belongs to the peptidase M48B family. Zn(2+) is required as a cofactor.

The protein resides in the cell inner membrane. This is Protease HtpX from Sodalis glossinidius (strain morsitans).